The chain runs to 501 residues: Aldehyde dehydrogenase mpl4 (501 aa).

231–236 (GSTASG) provides a ligand contact to NAD(+). Active-site residues include Glu-253 and Cys-287.

The protein belongs to the aldehyde dehydrogenase family.

The catalysed reaction is an aldehyde + NAD(+) + H2O = a carboxylate + NADH + 2 H(+). It functions in the pathway mycotoxin biosynthesis. In terms of biological role, aldehyde dehydrogenase; part of the gene cluster that mediates the biosynthesis of the mycotoxin citrinin, a hepato-nephrotoxic compound to humans due to inhibition of respiration complex III. The pathway begins with the synthesis of a keto-aldehyde intermediate by the citrinin PKS (pksCT) from successive condensations of 4 malonyl-CoA units, presumably with a simple acetyl-CoA starter unit. Release of the keto-aldehyde intermediate is consistent with the presence of the C-terminal reductive release domain. Mp11 collaborates with pksCT by catalyzing the hydrolysis of ACP-bound acyl intermediates to free the ACP from stalled intermediates. Mpl2 then catalyzes the oxidation of the C-12 methyl of the ketone intermediate to an alcohol intermediate which is further oxidized by the oxidoreductase mpl7 to produce a bisaldehyde intermediate. The fourth catalytic step is catalyzed by the mpl4 aldehyde dehydrogenase. The final transformation is the reduction of C-3 by mpl6 to provide the chemically stable citrinin nucleus. In Monascus purpureus (Red mold), this protein is Aldehyde dehydrogenase mpl4.